Reading from the N-terminus, the 325-residue chain is Glutarate 2-hydroxylase (325 aa).

Fe cation is bound by residues histidine 160, aspartate 162, and histidine 292.

This sequence belongs to the glutarate hydroxylase family. In terms of assembly, homotetramer. Fe(2+) serves as cofactor.

It carries out the reaction glutarate + 2-oxoglutarate + O2 = (S)-2-hydroxyglutarate + succinate + CO2. The protein operates within amino-acid degradation. Acts as an alpha-ketoglutarate-dependent dioxygenase catalyzing hydroxylation of glutarate (GA) to L-2-hydroxyglutarate (L2HG). Functions in a L-lysine degradation pathway that proceeds via cadaverine, glutarate and L-2-hydroxyglutarate. This is Glutarate 2-hydroxylase from Shigella boydii serotype 18 (strain CDC 3083-94 / BS512).